A 357-amino-acid chain; its full sequence is Thiamine thiazole synthase, chloroplastic (357 aa).

Residues Ala-102, 123-124, Gly-131, and Val-196 contribute to the substrate site; that span reads EQ. At Cys-233 the chain carries 2,3-didehydroalanine (Cys). Residues Asp-235, His-250, Met-304, and 314 to 316 contribute to the substrate site; that span reads RMG.

This sequence belongs to the THI4 family. Homooctamer. Requires Fe cation as cofactor. During the catalytic reaction, a sulfide is transferred from Cys-233 to a reaction intermediate, generating a dehydroalanine residue.

The protein localises to the plastid. It localises to the chloroplast. It carries out the reaction [ADP-thiazole synthase]-L-cysteine + glycine + NAD(+) = [ADP-thiazole synthase]-dehydroalanine + ADP-5-ethyl-4-methylthiazole-2-carboxylate + nicotinamide + 3 H2O + 2 H(+). Its function is as follows. Involved in biosynthesis of the thiamine precursor thiazole. Catalyzes the conversion of NAD and glycine to adenosine diphosphate 5-(2-hydroxyethyl)-4-methylthiazole-2-carboxylic acid (ADT), an adenylated thiazole intermediate. The reaction includes an iron-dependent sulfide transfer from a conserved cysteine residue of the protein to a thiazole intermediate. The enzyme can only undergo a single turnover, which suggests it is a suicide enzyme. May have additional roles in adaptation to various stress conditions and in DNA damage tolerance. The sequence is that of Thiamine thiazole synthase, chloroplastic from Chlamydomonas reinhardtii (Chlamydomonas smithii).